We begin with the raw amino-acid sequence, 804 residues long: DNA mismatch repair protein MutS (804 aa).

614–621 contacts ATP; that stretch reads GPNMAGKS.

It belongs to the DNA mismatch repair MutS family.

Its function is as follows. This protein is involved in the repair of mismatches in DNA. It is possible that it carries out the mismatch recognition step. This protein has a weak ATPase activity. The chain is DNA mismatch repair protein MutS from Ehrlichia ruminantium (strain Gardel).